Here is a 456-residue protein sequence, read N- to C-terminus: uncharacterized protein (456 aa).

In terms of domain architecture, TRAM spans 3–61 (TIKKNEVKTGKVIDLTHEGHGVVKVDRYPIFIPNALIDEEIKFKLIKVKKNFAIGKLIE). The [4Fe-4S] cluster site is built by Cys74, Cys80, Cys83, and Cys162. Residues Gln286, Tyr315, Glu336, and Asp384 each coordinate S-adenosyl-L-methionine. Catalysis depends on Cys411, which acts as the Nucleophile.

The protein belongs to the class I-like SAM-binding methyltransferase superfamily. RNA M5U methyltransferase family.

This is an uncharacterized protein from Staphylococcus epidermidis (strain ATCC 12228 / FDA PCI 1200).